Reading from the N-terminus, the 341-residue chain is UDP-N-acetylenolpyruvoylglucosamine reductase (341 aa).

One can recognise an FAD-binding PCMH-type domain in the interval M19–R191. The active site involves R167. S241 (proton donor) is an active-site residue. E337 is an active-site residue.

It belongs to the MurB family. It depends on FAD as a cofactor.

It is found in the cytoplasm. It carries out the reaction UDP-N-acetyl-alpha-D-muramate + NADP(+) = UDP-N-acetyl-3-O-(1-carboxyvinyl)-alpha-D-glucosamine + NADPH + H(+). It participates in cell wall biogenesis; peptidoglycan biosynthesis. In terms of biological role, cell wall formation. In Chromobacterium violaceum (strain ATCC 12472 / DSM 30191 / JCM 1249 / CCUG 213 / NBRC 12614 / NCIMB 9131 / NCTC 9757 / MK), this protein is UDP-N-acetylenolpyruvoylglucosamine reductase.